The primary structure comprises 129 residues: Small ribosomal subunit protein uS11 (129 aa).

Belongs to the universal ribosomal protein uS11 family. Part of the 30S ribosomal subunit. Interacts with proteins S7 and S18. Binds to IF-3.

Its function is as follows. Located on the platform of the 30S subunit, it bridges several disparate RNA helices of the 16S rRNA. Forms part of the Shine-Dalgarno cleft in the 70S ribosome. In Pasteurella multocida (strain Pm70), this protein is Small ribosomal subunit protein uS11.